Here is a 418-residue protein sequence, read N- to C-terminus: Adenosylhomocysteinase (418 aa).

The substrate site is built by Thr-53, Asp-125, and Glu-150. NAD(+) is bound at residue 151 to 153; the sequence is TTT. Lys-180 and Asp-184 together coordinate substrate. Residues Asn-185, 214-219, Glu-237, Asn-272, 293-295, and Asn-340 contribute to the NAD(+) site; these read GYGWCG and SGH.

The protein belongs to the adenosylhomocysteinase family. NAD(+) serves as cofactor.

It is found in the cytoplasm. The catalysed reaction is S-adenosyl-L-homocysteine + H2O = L-homocysteine + adenosine. Its pathway is amino-acid biosynthesis; L-homocysteine biosynthesis; L-homocysteine from S-adenosyl-L-homocysteine: step 1/1. Functionally, may play a key role in the regulation of the intracellular concentration of adenosylhomocysteine. The protein is Adenosylhomocysteinase of Aquifex aeolicus (strain VF5).